The sequence spans 357 residues: Crh-like protein 1 (357 aa).

The first 17 residues, 1 to 17 (MMLPLLAVSAFASLGAA), serve as a signal peptide directing secretion. A GH16 domain is found at 20-220 (YTSCNPTNSL…WAGGETDYDE (201 aa)). Residues Asn-52 and Asn-92 are each glycosylated (N-linked (GlcNAc...) asparagine). Glu-109 functions as the Nucleophile in the catalytic mechanism. Glu-113 functions as the Proton donor in the catalytic mechanism. A chitin-binding site is contributed by Glu-113. N-linked (GlcNAc...) asparagine glycosylation is present at Asn-131. Chitin is bound by residues Lys-193, Trp-197, and Thr-208. N-linked (GlcNAc...) asparagine glycosylation is found at Asn-242 and Asn-257. Gly-326 is lipidated: GPI-anchor amidated glycine. The propeptide at 327-357 (SASAVFTGAAVTNLPSFFFTVFFALAIALAF) is removed in mature form. The helical transmembrane segment at 337–357 (VTNLPSFFFTVFFALAIALAF) threads the bilayer.

The protein belongs to the glycosyl hydrolase 16 family. CRH1 subfamily. In terms of processing, the GPI-like anchor contains a phosphoceramide lipid group. The anchor position has not been determined.

Its subcellular location is the cell membrane. The protein resides in the secreted. The protein localises to the cell wall. It carries out the reaction Random endo-hydrolysis of N-acetyl-beta-D-glucosaminide (1-&gt;4)-beta-linkages in chitin and chitodextrins.. Dual chitinase/transglycosylase that plays a role in cell wall architecture. Chitinase and transglycosylase activities are coupled. Required for the polysaccharide cross-linking at the septa and the cell wall. More specifically, transfers chitin to 1,6-beta-glucan in the cell wall. The polypeptide is Crh-like protein 1 (Aspergillus fumigatus (strain ATCC MYA-4609 / CBS 101355 / FGSC A1100 / Af293) (Neosartorya fumigata)).